The chain runs to 64 residues: Small ribosomal subunit protein bS21 (64 aa).

Residues 42–64 form a disordered region; that stretch reads KKEKEKAAAKKRNKYNKRRSFYY. A compositionally biased stretch (basic residues) spans 50 to 64; it reads AKKRNKYNKRRSFYY.

Belongs to the bacterial ribosomal protein bS21 family.

This Malacoplasma penetrans (strain HF-2) (Mycoplasma penetrans) protein is Small ribosomal subunit protein bS21.